We begin with the raw amino-acid sequence, 254 residues long: Imidazole glycerol phosphate synthase subunit HisF (254 aa).

Catalysis depends on residues Asp-11 and Asp-130.

It belongs to the HisA/HisF family. In terms of assembly, heterodimer of HisH and HisF.

It localises to the cytoplasm. It carries out the reaction 5-[(5-phospho-1-deoxy-D-ribulos-1-ylimino)methylamino]-1-(5-phospho-beta-D-ribosyl)imidazole-4-carboxamide + L-glutamine = D-erythro-1-(imidazol-4-yl)glycerol 3-phosphate + 5-amino-1-(5-phospho-beta-D-ribosyl)imidazole-4-carboxamide + L-glutamate + H(+). The protein operates within amino-acid biosynthesis; L-histidine biosynthesis; L-histidine from 5-phospho-alpha-D-ribose 1-diphosphate: step 5/9. In terms of biological role, IGPS catalyzes the conversion of PRFAR and glutamine to IGP, AICAR and glutamate. The HisF subunit catalyzes the cyclization activity that produces IGP and AICAR from PRFAR using the ammonia provided by the HisH subunit. This chain is Imidazole glycerol phosphate synthase subunit HisF, found in Acidiphilium cryptum (strain JF-5).